We begin with the raw amino-acid sequence, 155 residues long: Photosystem II extrinsic protein V (155 aa).

Positions 1–20 (MFVKMIGWLVLFLFAHQTWA) are cleaved as a signal peptide. The heme c site is built by Cys-50, Cys-53, His-54, and His-105.

It belongs to the cytochrome c family. PsbV subfamily. In terms of assembly, PSII is composed of 1 copy each of membrane proteins PsbA, PsbB, PsbC, PsbD, PsbE, PsbF, PsbH, PsbI, PsbJ, PsbK, PsbL, PsbM, PsbT, PsbY, PsbZ, Psb30/Ycf12, at least 3 peripheral proteins of the oxygen-evolving complex and a large number of cofactors. It forms dimeric complexes. The extrinsic subunits in red algae are PsbO (OEC33), PsbQ', cytochrome c-550 and PsbU. Heme c serves as cofactor.

It is found in the plastid. It localises to the chloroplast thylakoid membrane. Functionally, one of the extrinsic, lumenal subunits of photosystem II (PSII). PSII is a light-driven water plastoquinone oxidoreductase, using light energy to abstract electrons from H(2)O, generating a proton gradient subsequently used for ATP formation. The extrinsic proteins stabilize the structure of photosystem II oxygen-evolving complex (OEC), the ion environment of oxygen evolution and protect the OEC against heat-induced inactivation. Unlike the T.vulcanus ortholog, it does not bind by itself to PSII, but requires all extrinsic members of the OEC. The protein is Photosystem II extrinsic protein V of Cyanidium caldarium (Red alga).